The primary structure comprises 226 residues: Acyl-protein thioesterase 1 homolog 1 (226 aa).

Catalysis depends on charge relay system residues Ser121, Asp174, and His206.

It belongs to the AB hydrolase superfamily. AB hydrolase 2 family.

The protein resides in the cytoplasm. It localises to the nucleus. The enzyme catalyses S-hexadecanoyl-L-cysteinyl-[protein] + H2O = L-cysteinyl-[protein] + hexadecanoate + H(+). Functionally, hydrolyzes fatty acids from S-acylated cysteine residues in proteins with a strong preference for palmitoylated G-alpha proteins over other acyl substrates. Mediates the deacylation of G-alpha proteins such as GPA1 in vivo, but has weak or no activity toward palmitoylated Ras proteins. Has weak lysophospholipase activity in vitro; however such activity may not exist in vivo. The chain is Acyl-protein thioesterase 1 homolog 1 from Dictyostelium discoideum (Social amoeba).